Consider the following 456-residue polypeptide: Proline--tRNA ligase (456 aa).

It belongs to the class-II aminoacyl-tRNA synthetase family. ProS type 3 subfamily. Homodimer.

The protein resides in the cytoplasm. It carries out the reaction tRNA(Pro) + L-proline + ATP = L-prolyl-tRNA(Pro) + AMP + diphosphate. Its function is as follows. Catalyzes the attachment of proline to tRNA(Pro) in a two-step reaction: proline is first activated by ATP to form Pro-AMP and then transferred to the acceptor end of tRNA(Pro). This Methanococcus aeolicus (strain ATCC BAA-1280 / DSM 17508 / OCM 812 / Nankai-3) protein is Proline--tRNA ligase.